The sequence spans 116 residues: Small ribosomal subunit protein uS13m (116 aa).

It belongs to the universal ribosomal protein uS13 family. As to quaternary structure, part of the small ribosomal subunit.

The protein localises to the mitochondrion. In terms of biological role, located at the top of the head of the small subunit, it contacts several helices of the 18S rRNA. This is Small ribosomal subunit protein uS13m (RPS13) from Daucus carota (Wild carrot).